We begin with the raw amino-acid sequence, 554 residues long: Propanediol dehydratase large subunit (554 aa).

Belongs to the diol/glycerol dehydratase large subunit family. As to quaternary structure, the propanediol dehydratase enzyme is a heterotrimeric complex composed of a large (PduC), a medium (PduD) and a small (PduE) subunit. Adenosylcob(III)alamin serves as cofactor.

Its subcellular location is the bacterial microcompartment. The catalysed reaction is propane-1,2-diol = propanal + H2O. It functions in the pathway polyol metabolism; 1,2-propanediol degradation. Functionally, part of the PduCDE complex that catalyzes the dehydration of 1,2-propanediol (1,2-PD) to propionaldehyde. This subunit is directly targeted to the bacterial microcompartment (BMC). Expression of a cosmid containing the full 21-gene pdu operon in E.coli allows E.coli to grow on 1,2-propanediol (1,2-PD) with the appearance of BMCs in its cytoplasm. In terms of biological role, the 1,2-PD-specific bacterial microcompartment (BMC) concentrates low levels of 1,2-PD catabolic enzymes, concentrates volatile reaction intermediates thus enhancing pathway flux and keeps the level of toxic, mutagenic propionaldehyde low. This is Propanediol dehydratase large subunit from Citrobacter freundii.